The chain runs to 900 residues: MMPLAGIAWNLMLLFSAVQGLPLQDGEGTQHPDLLNNPPKGSVEPVALEQLVHQAILKKDFLAQDVFFPGTTAIPTRAAPISLTEGVSDASGVLTTAVGGAFSLPPQLSTLIPPSPAPTGGPGPSPEAEEETTTTLITTTTVTTVHSPVLCNNNISESEGLLEAPEYGGSTFFGGLDCTYSVSVYLGYGVEIRVERLNLSKEEALSIEGLEEDRRFLLANETLMAEGQVIRSPTNHVAVRFQTYRATSPGAFRLRYQAFVLSCVFPPRPENGEVTVTDLHPGGAANFRCSAGFTLKGGESLVCLNISRPEWSGKPPVCAASCGGVIRNATVGRIVSPDISTSHSNNHGNNLSCHWLIEAAEGQRLHLHFERVSLDEDNDRLVVRSGSSPLSPVIYDSDIDDVPERGLLSDAQSLYIELISDNPAVPLLLSLRYEVFSESRCYEPFLAHGNFTTTDPLYSPGSLVSFFCNAGYMLEQGPPVIECVDPADPHWNESEPVCKALCGGEISEPAGVILSPDWPQNYGKGQDCVWGIHVQEDRRVLLEIEILNIRRSDALTVYDGDDLTARVLGQYMGVHQRFNLFSSANDVTLQFQSDSNDPVFSLSQGFIIHFKEVPRNDTCPALPEVPNGWKTSSHPDLIRGTVVTYQCEPGYDISGSDILTCQWDLSWSNAPPTCEKILNCADPGEIANGVRRASDPRFPIGSHVQYSCNEGYTLEGSRTLTCYNRDTGTPKWSDRIPKCVLKYEPCLNPGVPENGYQTLYKHHYQAGEALRFFCYEGFELIGEVTITCAPGHPSQWTSQPPLCKVAYEELLDDRKLEVTQTTDPSHQMEGGNIALAIFLPIILVILLIGGIYIYYTKFQGKSLFGFSFPASHSYSPITVESDFNNPLYEAGDTREYEVSI.

The first 20 residues, 1–20 (MMPLAGIAWNLMLLFSAVQG), serve as a signal peptide directing secretion. The tract at residues 111–130 (LIPPSPAPTGGPGPSPEAEE) is disordered. A compositionally biased stretch (pro residues) spans 113–125 (PPSPAPTGGPGPS). Cysteine 151 and cysteine 178 form a disulfide bridge. In terms of domain architecture, CUB 1 spans 151 to 259 (CNNNISESEG…GAFRLRYQAF (109 aa)). Residues asparagine 154, asparagine 198, and asparagine 220 are each glycosylated (N-linked (GlcNAc...) asparagine). The Sushi 1 domain maps to 261 to 320 (LSCVFPPRPENGEVTVTDLHPGGAANFRCSAGFTLKGGESLVCLNISRPEWSGKPPVCAA). 6 cysteine pairs are disulfide-bonded: cysteine 263-cysteine 303, cysteine 289-cysteine 318, cysteine 322-cysteine 353, cysteine 441-cysteine 483, cysteine 468-cysteine 498, and cysteine 502-cysteine 528. N-linked (GlcNAc...) asparagine glycosylation is found at asparagine 305, asparagine 328, asparagine 350, asparagine 450, and asparagine 492. Residues 322–436 (CGGVIRNATV…LLLSLRYEVF (115 aa)) form the CUB 2 domain. Residues 439 to 500 (SRCYEPFLAH…WNESEPVCKA (62 aa)) enclose the Sushi 2 domain. In terms of domain architecture, CUB 3 spans 502–613 (CGGEISEPAG…QGFIIHFKEV (112 aa)). N-linked (GlcNAc...) asparagine glycosylation is present at asparagine 616. Sushi domains follow at residues 617–676 (DTCP…TCEK), 678–741 (LNCA…KCVL), and 744–805 (EPCL…LCKV). Disulfide bonds link cysteine 619-cysteine 661, cysteine 647-cysteine 674, cysteine 680-cysteine 722, cysteine 708-cysteine 739, cysteine 746-cysteine 788, and cysteine 774-cysteine 803. Residues 833-853 (IALAIFLPIILVILLIGGIYI) form a helical membrane-spanning segment.

The protein belongs to the SEZ6 family.

The protein localises to the cell membrane. Functionally, may play a role in cell-cell recognition and in neuronal membrane signaling. In Xenopus laevis (African clawed frog), this protein is Seizure protein 6 homolog (sez6).